The primary structure comprises 339 residues: Zinc metalloprotease MJ0392 (339 aa).

Transmembrane regions (helical) follow at residues 10–30 (IMGIPIELHITFILFLVVIIG) and 33–53 (IMNNSIFWAVLFILLFVSVVL). Histidine 54 is a Zn(2+) binding site. Glutamate 55 is an active-site residue. Histidine 58 is a binding site for Zn(2+). Helical transmembrane passes span 96-116 (IAGPLVSFIIGIVLLIVSQFF) and 125-145 (LLYTLSLLNLMLGGFNLIPAF). Aspartate 148 serves as a coordination point for Zn(2+). 2 helical membrane passes run 180-200 (IMLLFGLLSMNIILILVSLFV) and 251-271 (YFGYPVVENGKLVGCIGIGNI). 2 CBS domains span residues 226-281 (MTPN…VRDY) and 281-335 (YMEK…ELKE).

It belongs to the peptidase M50B family. As to quaternary structure, monomer. Zn(2+) serves as cofactor.

Its subcellular location is the cell membrane. With respect to regulation, inhibited by 1,10-phenanthroline. In terms of biological role, a site-2 regulated intramembrane protease (S2P) that cleaves type-2 transmembrane proteins within their membrane-spanning domains; its endogenous substrate is unknown. Regulated intramembrane proteolysis (RIP) occurs when an extracytoplasmic signal triggers a concerted proteolytic cascade to transmit information and elicit cellular responses. A membrane-spanning regulatory substrate protein is first cut extracytoplasmically (site-1 protease, S1P), then within the membrane itself (site-2 protease, S2P, this enzyme), while cytoplasmic proteases finish degrading the regulatory protein, liberating the effector protein. Possible signals, S1P and substrates are unknown in this organism. This is Zinc metalloprotease MJ0392 from Methanocaldococcus jannaschii (strain ATCC 43067 / DSM 2661 / JAL-1 / JCM 10045 / NBRC 100440) (Methanococcus jannaschii).